The chain runs to 215 residues: Cytochrome b6 (215 aa).

Residues 32–52 form a helical membrane-spanning segment; the sequence is IFYCFGGIVFTCFLVQVATGF. A heme c-binding site is contributed by cysteine 35. Residues histidine 86 and histidine 100 each coordinate heme b. 3 helical membrane passes run 90–110, 116–136, and 186–206; these read ASMM…TGGF, LTWV…VTGY, and AHTF…FLMI. 2 residues coordinate heme b: histidine 187 and histidine 202.

This sequence belongs to the cytochrome b family. PetB subfamily. The 4 large subunits of the cytochrome b6-f complex are cytochrome b6, subunit IV (17 kDa polypeptide, PetD), cytochrome f and the Rieske protein, while the 4 small subunits are PetG, PetL, PetM and PetN. The complex functions as a dimer. Heme b serves as cofactor. Heme c is required as a cofactor.

The protein resides in the plastid. The protein localises to the chloroplast thylakoid membrane. Component of the cytochrome b6-f complex, which mediates electron transfer between photosystem II (PSII) and photosystem I (PSI), cyclic electron flow around PSI, and state transitions. This Trieres chinensis (Marine centric diatom) protein is Cytochrome b6.